Consider the following 394-residue polypeptide: MAKAKFERKKPHVNVGTIGHVDHGKTTLTAAISAVLSKTYGGEVRNFAQIDNAPEERERGITINTSHIEYDTPSRHYAHVDCPGHADYVKNMITGAAQMDGAILVVAATDGPMPQTREHILLSRQVGVPFIIVFMNKCDMVDDEELLELVEMEVRELLSEYDFPGDDLPVIQGSALKALEGQPEWEAKILELAEALDTYIPEPERDIDKPFLLPIEDVFSISGRGTVVTGRVERGIVRVGDEVEIVGVKATTKTTCTGVEMFRKLLDEGRAGENCGVLLRGTKRDDVERGQVLAKPASINPHTTFESEVYVLSKEEGGRHTPFFKGYRPQFYFRTTDVTGTIELPEGVEMVMPGDNIKMVVTLIYPIAMDDGLRFAIREGGRTVGAGVVAKIIA.

A tr-type G domain is found at 10–204 (KPHVNVGTIG…ALDTYIPEPE (195 aa)). The interval 19–26 (GHVDHGKT) is G1. Residue 19–26 (GHVDHGKT) participates in GTP binding. T26 is a binding site for Mg(2+). A G2 region spans residues 60–64 (GITIN). The G3 stretch occupies residues 81–84 (DCPG). Residues 81–85 (DCPGH) and 136–139 (NKCD) contribute to the GTP site. A G4 region spans residues 136 to 139 (NKCD). Residues 174 to 176 (SAL) form a G5 region.

The protein belongs to the TRAFAC class translation factor GTPase superfamily. Classic translation factor GTPase family. EF-Tu/EF-1A subfamily. In terms of assembly, monomer.

It localises to the cytoplasm. The catalysed reaction is GTP + H2O = GDP + phosphate + H(+). In terms of biological role, GTP hydrolase that promotes the GTP-dependent binding of aminoacyl-tRNA to the A-site of ribosomes during protein biosynthesis. The chain is Elongation factor Tu from Shewanella denitrificans (strain OS217 / ATCC BAA-1090 / DSM 15013).